A 214-amino-acid polypeptide reads, in one-letter code: Thymidylate kinase (214 aa).

Residue 13–20 (GPDACGKS) participates in ATP binding.

It belongs to the thymidylate kinase family.

It catalyses the reaction dTMP + ATP = dTDP + ADP. In terms of biological role, phosphorylation of dTMP to form dTDP in both de novo and salvage pathways of dTTP synthesis. The polypeptide is Thymidylate kinase (Malacoplasma penetrans (strain HF-2) (Mycoplasma penetrans)).